Consider the following 148-residue polypeptide: Large ribosomal subunit protein uL15 (148 aa).

A compositionally biased stretch (basic residues) spans 1–30; it reads MPSRLRKTRKLRGHVSHGHGRIGKHRKHPG. A disordered region spans residues 1–38; the sequence is MPSRLRKTRKLRGHVSHGHGRIGKHRKHPGGRGNAGGL. Residue His-39 is modified to (3S)-3-hydroxyhistidine. N6-acetyllysine is present on residues Lys-47 and Lys-55. Ser-68 carries the post-translational modification Phosphoserine. The residue at position 110 (Lys-110) is an N6-acetyllysine.

This sequence belongs to the universal ribosomal protein uL15 family. In terms of assembly, component of the large ribosomal subunit. Post-translationally, hydroxylated on His-39 by MINA.

It localises to the cytoplasm. Functionally, component of the large ribosomal subunit. The ribosome is a large ribonucleoprotein complex responsible for the synthesis of proteins in the cell. The protein is Large ribosomal subunit protein uL15 (RPL27A) of Homo sapiens (Human).